The following is a 140-amino-acid chain: NADH-quinone oxidoreductase subunit I (140 aa).

4Fe-4S ferredoxin-type domains are found at residues 42–71 (GSFTLHSEKCIACGLCQQACPNKVIKVGSI) and 81–110 (ASYEMEMKYCLFCGLCVEACPTNALVFNQE). [4Fe-4S] cluster-binding residues include Cys51, Cys54, Cys57, Cys61, Cys90, Cys93, Cys96, and Cys100.

It belongs to the complex I 23 kDa subunit family. NDH-1 is composed of 14 different subunits. Subunits NuoA, H, J, K, L, M, N constitute the membrane sector of the complex. Requires [4Fe-4S] cluster as cofactor.

The protein resides in the cell membrane. It carries out the reaction a quinone + NADH + 5 H(+)(in) = a quinol + NAD(+) + 4 H(+)(out). Functionally, NDH-1 shuttles electrons from NADH, via FMN and iron-sulfur (Fe-S) centers, to quinones in the respiratory chain. The immediate electron acceptor for the enzyme in this species is believed to be ubiquinone. Couples the redox reaction to proton translocation (for every two electrons transferred, four hydrogen ions are translocated across the cytoplasmic membrane), and thus conserves the redox energy in a proton gradient. This Carboxydothermus hydrogenoformans (strain ATCC BAA-161 / DSM 6008 / Z-2901) protein is NADH-quinone oxidoreductase subunit I.